A 382-amino-acid polypeptide reads, in one-letter code: Alkanesulfonate monooxygenase (382 aa).

It belongs to the SsuD family.

The enzyme catalyses an alkanesulfonate + FMNH2 + O2 = an aldehyde + FMN + sulfite + H2O + 2 H(+). Its function is as follows. Catalyzes the desulfonation of aliphatic sulfonates. The chain is Alkanesulfonate monooxygenase from Ectopseudomonas mendocina (strain ymp) (Pseudomonas mendocina).